The following is an 87-amino-acid chain: Acylphosphatase (87 aa).

Positions Arg-2–Tyr-87 constitute an Acylphosphatase-like domain. Catalysis depends on residues Arg-17 and Asn-35.

The protein belongs to the acylphosphatase family.

It catalyses the reaction an acyl phosphate + H2O = a carboxylate + phosphate + H(+). This is Acylphosphatase (acyP) from Deinococcus geothermalis (strain DSM 11300 / CIP 105573 / AG-3a).